Here is a 130-residue protein sequence, read N- to C-terminus: Small ribosomal subunit protein uS8 (130 aa).

This sequence belongs to the universal ribosomal protein uS8 family. In terms of assembly, part of the 30S ribosomal subunit. Contacts proteins S5 and S12.

Functionally, one of the primary rRNA binding proteins, it binds directly to 16S rRNA central domain where it helps coordinate assembly of the platform of the 30S subunit. This Aeromonas hydrophila subsp. hydrophila (strain ATCC 7966 / DSM 30187 / BCRC 13018 / CCUG 14551 / JCM 1027 / KCTC 2358 / NCIMB 9240 / NCTC 8049) protein is Small ribosomal subunit protein uS8.